Here is a 79-residue protein sequence, read N- to C-terminus: Small ribosomal subunit protein bS18 (79 aa).

Belongs to the bacterial ribosomal protein bS18 family. Part of the 30S ribosomal subunit. Forms a tight heterodimer with protein bS6.

Functionally, binds as a heterodimer with protein bS6 to the central domain of the 16S rRNA, where it helps stabilize the platform of the 30S subunit. The chain is Small ribosomal subunit protein bS18 from Streptococcus pyogenes serotype M49 (strain NZ131).